The sequence spans 348 residues: Protein RecA (348 aa).

69–76 (GPESSGKT) is a binding site for ATP.

This sequence belongs to the RecA family.

The protein localises to the cytoplasm. Its function is as follows. Can catalyze the hydrolysis of ATP in the presence of single-stranded DNA, the ATP-dependent uptake of single-stranded DNA by duplex DNA, and the ATP-dependent hybridization of homologous single-stranded DNAs. It interacts with LexA causing its activation and leading to its autocatalytic cleavage. This chain is Protein RecA, found in Gluconacetobacter polyoxogenes (Acetobacter polyoxogenes).